The sequence spans 598 residues: EF-hand and coiled-coil domain-containing protein 1 (598 aa).

Residues Met1–Arg22 are disordered. The 36-residue stretch at Gly54–Arg89 folds into the EF-hand domain. Disordered stretches follow at residues Ala96–Glu127, Arg175–Glu198, and Tyr326–Pro411. Residues Arg175 to Pro185 show a composition bias toward basic residues. The stretch at Asp196–Glu303 forms a coiled coil. The segment covering Pro343–Asp359 has biased composition (basic and acidic residues). The segment covering Ser394 to Trp404 has biased composition (acidic residues). Residues Thr479–Ser533 adopt a coiled-coil conformation.

This is EF-hand and coiled-coil domain-containing protein 1 (EFCC1) from Homo sapiens (Human).